We begin with the raw amino-acid sequence, 477 residues long: Cytoplasmic 60S subunit biogenesis factor ZNF622 (477 aa).

An N-acetylalanine modification is found at Ala-2. 2 consecutive U1-type zinc fingers follow at residues Tyr-4–His-28 and Thr-67–His-91. Residues Ala-135–Asp-212 are disordered. Over residues Gly-167–Pro-178 the composition is skewed to basic and acidic residues. A compositionally biased stretch (acidic residues) spans Glu-196 to Asp-212. Ser-276 bears the Phosphoserine mark.

The protein belongs to the REI1 family. As to quaternary structure, homo- and heterodimer. Associates with pre-60S ribosomal particles. Interacts with MELK and MYBL2. Interacts with DNAJC21. Post-translationally, phosphorylated by MELK. The phosphorylation may redirect the protein to the nucleus. Ubiquitinated by HECTD1, leading to its degradation. As to expression, expressed in lung, kidney, spleen, liver and brain with lowest expression in kidney.

Its subcellular location is the cytoplasm. The protein localises to the nucleus. Pre-60S-associated cytoplasmic factor involved in the cytoplasmic maturation of the 60S subunit. This is Cytoplasmic 60S subunit biogenesis factor ZNF622 from Homo sapiens (Human).